The primary structure comprises 689 residues: MAQHTFLVEIGTAELPPKALRSLAEAFADNFKAELTKADLAFGDIEWFASPRRLALKVHALASEQPSKSVEKRGPAVSQAFDAEGKPTKAAEGWARGNGITVEQAERLVTDKGEWLVHTAKVEGRPAKDLLGELVASALAKLPIPKMMRWGDKTIQFVRPVFTVTLLLDGELVPAHILGIDSARTIRGHRFMGEPEFTIDNASQYPQILLEKGKVVADFMARKAKIKADAEAAAAAFGGVADLDDALLEEVTALVEWPVVLTANFEEKFLAVPAEALVHTMKGDQKYFPVYDKNGKLLPKFIFVTNIESKDPSQIISGNEKVVRPRLSDAEFFFKTDLKQTLASRLPRLETVLFQQQLGTVKAKVERIETVAGFIAERIGANVAQAKRAGLLSKCDLMTNMVGEFASTQGVMGMHYARHDGEDEVVAVALNEQYMPRFAGDALPSALEACAVALADKLDTLAGIFGIGMLPKGDKDPFALRRAAIGALRIMTEKQLDLDLVELVEEAVRVYGDKLTNKTVVTDVVDFMLGRFRAAYQDEGIGADVVLAVLARRPTRPLDFDRRVKAVSHFRSLDAALALAAANKRVSNILAKVEGELPTAVKPELLQDAAEKALATQVAELQAELAPLFAAGDYQAALTRLAALREPVDTFFNEVMVMADDEALKANRLALLNNLRNLFLQVADISLLQ.

Belongs to the class-II aminoacyl-tRNA synthetase family. Tetramer of two alpha and two beta subunits.

It is found in the cytoplasm. It catalyses the reaction tRNA(Gly) + glycine + ATP = glycyl-tRNA(Gly) + AMP + diphosphate. The chain is Glycine--tRNA ligase beta subunit from Aeromonas salmonicida (strain A449).